The sequence spans 697 residues: MSIPFGLDFGNNSSVLAVARNRGIDIVVNEVSNRSTPSLVGFGQKNRFLGEAGKNKQTSNIKNTVDNLKRIVGLDHAHSDFEEEAKFFSSKLVKMEDGKIGAQVRFAGEQQVFSATQIAAMFMNRAKTIVQDETKGKVTDVALAVPAWYNEAQRYAAADAARIAGLNPVRVVNDVTAAAVSYGVFKTDLPEGEEKPRRVAFVDIGHSSYTCSIGSFKKGELKILGTAYDKHFGGRNFDRAITEHFAEEFKGKYKIDIRENAKAYNRVMTAAEKLKKVLSANTAAPFNIESVMNDVDVSSQLTREELEELVAPLLKRVTEPVTKALAQAKLTPEDIDFVEIIGGTTRIPCLKNAISAAFNKPLSTTLNQDEAIAKGAAFICAIHSPTLKVRPFKFEDIHEYSVSYHWDQQVEDEDHLEVFPAGSSYPSTKLITLHRTGDFTMTAKYTNPEVLPAGMPEEIAKWEITGVKVPEGETSVPVKLKLRCDPSGFHIIENAYTVEDIKVKEQIPPAADAPEDAEPEYKEVTKTVKKDTLQIVAHTFALEEAVLNELIEKENELAAQDKLVAETEDRKNTLEEYVYTLRGKLDEEYAAFASDEEKTKLKDMLAKAEEWLYDEGYDSTKAKYIAKYEELASLGNVIRGRYMAKEEEKRQALRAKQEAAQMAEMAEKLAAQRAAEQKAQESKAESDKDAEGDIDLD.

Positions 664-674 (EMAEKLAAQRA) are enriched in low complexity. A disordered region spans residues 664-697 (EMAEKLAAQRAAEQKAQESKAESDKDAEGDIDLD). Basic and acidic residues predominate over residues 675–691 (AEQKAQESKAESDKDAE).

This sequence belongs to the heat shock protein 70 family.

Its subcellular location is the cytoplasm. In Eremothecium gossypii (strain ATCC 10895 / CBS 109.51 / FGSC 9923 / NRRL Y-1056) (Yeast), this protein is Heat shock protein homolog SSE1 (SSE1).